A 138-amino-acid polypeptide reads, in one-letter code: Large ribosomal subunit protein uL16 (138 aa).

Residues 1–22 form a disordered region; it reads MQQPARTKYRKQQKGRNKGIAT. Basic residues predominate over residues 7–17; that stretch reads TKYRKQQKGRN.

It belongs to the universal ribosomal protein uL16 family. Part of the 50S ribosomal subunit.

Its function is as follows. Binds 23S rRNA and is also seen to make contacts with the A and possibly P site tRNAs. The protein is Large ribosomal subunit protein uL16 of Nitrosospira multiformis (strain ATCC 25196 / NCIMB 11849 / C 71).